The chain runs to 277 residues: Large ribosomal subunit protein uL2 (277 aa).

The tract at residues 226–277 is disordered; it reads NPIDHPHGGGEGRTSGGRHPVTPWGKPTKGKKTRSNKSTNKFILISRHKRKK.

Belongs to the universal ribosomal protein uL2 family. Part of the 50S ribosomal subunit. Forms a bridge to the 30S subunit in the 70S ribosome.

Its function is as follows. One of the primary rRNA binding proteins. Required for association of the 30S and 50S subunits to form the 70S ribosome, for tRNA binding and peptide bond formation. It has been suggested to have peptidyltransferase activity; this is somewhat controversial. Makes several contacts with the 16S rRNA in the 70S ribosome. The protein is Large ribosomal subunit protein uL2 of Rhodopseudomonas palustris (strain BisA53).